A 309-amino-acid polypeptide reads, in one-letter code: Tagatose-6-phosphate kinase (309 aa).

It belongs to the carbohydrate kinase PfkB family. LacC subfamily.

It catalyses the reaction D-tagatofuranose 6-phosphate + ATP = D-tagatofuranose 1,6-bisphosphate + ADP + H(+). The protein operates within carbohydrate metabolism; D-tagatose 6-phosphate degradation; D-glyceraldehyde 3-phosphate and glycerone phosphate from D-tagatose 6-phosphate: step 1/2. This chain is Tagatose-6-phosphate kinase, found in Streptococcus pyogenes serotype M12 (strain MGAS2096).